The sequence spans 367 residues: Serine O-succinyltransferase (367 aa).

The region spanning 41 to 351 is the AB hydrolase-1 domain; sequence NAVLILTGLS…SPQGHDAFLV (311 aa). The important for substrate specificity stretch occupies residues 48-51; the sequence is GLSP. Serine 146 (nucleophile) is an active-site residue. Arginine 215 is a substrate binding site. Catalysis depends on residues aspartate 313 and histidine 346. Substrate is bound at residue aspartate 347.

This sequence belongs to the AB hydrolase superfamily. MetX family. Homodimer.

The protein localises to the cytoplasm. The catalysed reaction is succinyl-CoA + L-serine = O-succinyl-L-serine + CoA. It carries out the reaction L-homoserine + succinyl-CoA = O-succinyl-L-homoserine + CoA. It functions in the pathway amino-acid biosynthesis; L-cysteine biosynthesis; L-cysteine from L-serine: step 1/2. In terms of biological role, transfers a succinyl group from succinyl-CoA to L-serine, forming succinyl-L-serine. In vitro, also has homoserine succinyl transferase activity. This Frateuria aurantia (strain ATCC 33424 / DSM 6220 / KCTC 2777 / LMG 1558 / NBRC 3245 / NCIMB 13370) (Acetobacter aurantius) protein is Serine O-succinyltransferase.